Consider the following 560-residue polypeptide: uncharacterized protein (560 aa).

A run of 5 helical transmembrane segments spans residues 9–29 (LVIT…SFLL), 61–81 (ILVP…KYKI), 136–156 (IGIA…ASMM), 305–325 (SLQI…ASFI), and 442–462 (VVLE…TNFY).

The protein resides in the membrane. This is an uncharacterized protein from Saccharomyces cerevisiae (strain ATCC 204508 / S288c) (Baker's yeast).